A 310-amino-acid chain; its full sequence is Cysteine synthase (310 aa).

Position 46 is an N6-(pyridoxal phosphate)lysine (K46). Pyridoxal 5'-phosphate-binding positions include N76, 180–184, and S268; that span reads GTGGT.

The protein belongs to the cysteine synthase/cystathionine beta-synthase family. Homodimer. Pyridoxal 5'-phosphate serves as cofactor.

The enzyme catalyses O-acetyl-L-serine + hydrogen sulfide = L-cysteine + acetate. The protein operates within amino-acid biosynthesis; L-cysteine biosynthesis; L-cysteine from L-serine: step 2/2. The polypeptide is Cysteine synthase (cysK) (Staphylococcus epidermidis (strain ATCC 35984 / DSM 28319 / BCRC 17069 / CCUG 31568 / BM 3577 / RP62A)).